The primary structure comprises 288 residues: Bifunctional protein FolD (288 aa).

NADP(+) is bound by residues 166–168 and Ile-232; that span reads GAS.

The protein belongs to the tetrahydrofolate dehydrogenase/cyclohydrolase family. As to quaternary structure, homodimer.

It carries out the reaction (6R)-5,10-methylene-5,6,7,8-tetrahydrofolate + NADP(+) = (6R)-5,10-methenyltetrahydrofolate + NADPH. The enzyme catalyses (6R)-5,10-methenyltetrahydrofolate + H2O = (6R)-10-formyltetrahydrofolate + H(+). Its pathway is one-carbon metabolism; tetrahydrofolate interconversion. Catalyzes the oxidation of 5,10-methylenetetrahydrofolate to 5,10-methenyltetrahydrofolate and then the hydrolysis of 5,10-methenyltetrahydrofolate to 10-formyltetrahydrofolate. This is Bifunctional protein FolD from Cronobacter sakazakii (strain ATCC BAA-894) (Enterobacter sakazakii).